Here is a 635-residue protein sequence, read N- to C-terminus: MAGUK p55 subfamily member 4 (635 aa).

A compositionally biased stretch (basic and acidic residues) spans 1 to 16 (MRQSDRGAELTNEDRA). Residues 1–23 (MRQSDRGAELTNEDRALPTPPDP) form a disordered region. 2 consecutive L27 domains span residues 23-79 (PENG…EKKL) and 86-136 (AQIL…FEPL). The PDZ domain occupies 153–234 (IVCLVKNQQP…TIMFKVIPVS (82 aa)). The region spanning 241 to 311 (QKMVYVRAMI…PSNHLLKRKQ (71 aa)) is the SH3 domain. Positions 426–615 (HRLIVLVGPS…ACGQLLSAIQ (190 aa)) constitute a Guanylate kinase-like domain. The stretch at 567–622 (VDMKFKDEDLQEMEELAQKMESQFGQFFDHVIVNDNLQDACGQLLSAIQKAQEELQ) forms a coiled coil.

This sequence belongs to the MAGUK family. In terms of assembly, may interact with GRIA2. Interacts with MPDZ. Forms a complex with CRB1 and PALS1. Interacts with FASLG. Detected in the retina (at protein level). Highly enriched in the retina where it is mainly expressed by rod photoreceptors; detected in the inner segment of the photoreceptor layer and in the outer nuclear layer. Also detected at much lower levels in pineal gland, cerebellum, cortex, hippocampus, olfactory bulb, heart, liver and spleen. Expressed in the CA1-CA3 regions of pyramidal cell layers and in the granule cell layer of dentate gyrus in the hippocampus. In the cerebellum, expressed in Purkinje cells and throughout the granule cell layer. In the olfactory bulb, expressed in mitral cells.

It localises to the cytoplasm. Its function is as follows. May play a role in retinal photoreceptors development. This Mus musculus (Mouse) protein is MAGUK p55 subfamily member 4 (Mpp4).